The following is a 231-amino-acid chain: Ribonuclease 3 (231 aa).

The 130-residue stretch at 6 to 135 (AAMLKERFGI…FVGALYLDQG (130 aa)) folds into the RNase III domain. Glu-48 contributes to the Mg(2+) binding site. The active site involves Asp-52. Mg(2+)-binding residues include Asp-121 and Glu-124. Glu-124 is a catalytic residue. A DRBM domain is found at 161 to 230 (DYKTTLQEYL…ARQAYSQLQQ (70 aa)). Residues 209-231 (WGHSKKEAEQSAARQAYSQLQQK) form a disordered region. Over residues 220–231 (AARQAYSQLQQK) the composition is skewed to polar residues.

Belongs to the ribonuclease III family. Homodimer. It depends on Mg(2+) as a cofactor.

It is found in the cytoplasm. It catalyses the reaction Endonucleolytic cleavage to 5'-phosphomonoester.. Functionally, digests double-stranded RNA. Involved in the processing of primary rRNA transcript to yield the immediate precursors to the large and small rRNAs (23S and 16S). Processes some mRNAs, and tRNAs when they are encoded in the rRNA operon. Processes pre-crRNA and tracrRNA of type II CRISPR loci if present in the organism. The protein is Ribonuclease 3 of Lactiplantibacillus plantarum (strain ATCC BAA-793 / NCIMB 8826 / WCFS1) (Lactobacillus plantarum).